Consider the following 388-residue polypeptide: MSKTNPNKLYSLRKLKTGTASVAVDLTVLGTGLANTTDVKAESRRYQAPPRVLLQGKEANKVFEERKALEKQARDLGDTINHMSQTISEQSRKIAALKSEAELKNQQALEALNNKNKQISDLTNENAQLKEAIEGYVQTIQNASREIAAKQQELAAAKSQLEAKNAEIEALKQQDASKTEEIAKLQSEAATLENLLGSAKRELTELQAKLDTATAEKAKLESQVTTLENLLGSAKRELTDLQAKLDAANAEKEKLQSQAATLEKQLEATKKELADLQAKLAATNQEKEKLEAEAKALKEQLAKQAEELAKLKADKASGAQKPDTKPGNKEVPTRPSQTRTNTNKAPMAQTKRQLPSTGEETTNPFFTAAALTVIASAGVLALKRKEEN.

The N-terminal stretch at 1–41 is a signal peptide; it reads MSKTNPNKLYSLRKLKTGTASVAVDLTVLGTGLANTTDVKA. D repeat units follow at residues 288–293, 294–299, 302–307, and 309–314; these read EKLEAE, AKALKE, AKQAEE, and AKLKAD. Residues 308–362 are disordered; that stretch reads LAKLKADKASGAQKPDTKPGNKEVPTRPSQTRTNTNKAPMAQTKRQLPSTGEETT. The span at 322 to 332 shows a compositional bias: basic and acidic residues; it reads PDTKPGNKEVP. A compositionally biased stretch (polar residues) spans 334 to 362; sequence RPSQTRTNTNKAPMAQTKRQLPSTGEETT. An LPXTG sorting signal motif is present at residues 354–358; it reads LPSTG. A Pentaglycyl murein peptidoglycan amidated threonine modification is found at threonine 357. Positions 358 to 388 are cleaved as a propeptide — removed by sortase; sequence GEETTNPFFTAAALTVIASAGVLALKRKEEN.

It is found in the secreted. The protein localises to the cell wall. Its function is as follows. Binds IgG molecules of the Ig1, Ig2 and Ig4 subclasses, and also binds fibrinogen. This chain is Fibrinogen- and Ig-binding protein (mrp4), found in Streptococcus pyogenes.